Reading from the N-terminus, the 268-residue chain is Shikimate dehydrogenase (NADP(+)) (268 aa).

Residues 13 to 15 (SLS) and Thr-60 each bind shikimate. The active-site Proton acceptor is Lys-64. Position 76 (Glu-76) interacts with NADP(+). Shikimate-binding residues include Asn-85 and Asp-100. NADP(+)-binding positions include 124–128 (GAGGA), 148–153 (NRTMAR), and Ile-209. Tyr-211 lines the shikimate pocket. Gly-232 contacts NADP(+).

Belongs to the shikimate dehydrogenase family. Homodimer.

The enzyme catalyses shikimate + NADP(+) = 3-dehydroshikimate + NADPH + H(+). The protein operates within metabolic intermediate biosynthesis; chorismate biosynthesis; chorismate from D-erythrose 4-phosphate and phosphoenolpyruvate: step 4/7. Involved in the biosynthesis of the chorismate, which leads to the biosynthesis of aromatic amino acids. Catalyzes the reversible NADPH linked reduction of 3-dehydroshikimate (DHSA) to yield shikimate (SA). This is Shikimate dehydrogenase (NADP(+)) from Staphylococcus aureus (strain USA300).